The following is a 971-amino-acid chain: Translation initiation factor IF-2 (971 aa).

Residues 48-63 (DHLRKSHGATDGDKRK) show a composition bias toward basic and acidic residues. Disordered stretches follow at residues 48–86 (DHLR…ARTI) and 100–381 (DDVA…STFQ). Positions 105-114 (GADQGQAQVA) are enriched in low complexity. The span at 121-181 (ELKRREEEAR…EEEAATKRAA (61 aa)) shows a compositional bias: basic and acidic residues. Residues 182–202 (AEVAAAQQQAAAQQAAAEQEA) are compositionally biased toward low complexity. Basic and acidic residues predominate over residues 210–261 (DEARAAAERAAQREAAKKAEDAAREAADKARAEQEEISKRRAAAEAEARAIR). The segment covering 277-286 (PPKPVEPPKP) has biased composition (pro residues). Residues 304 to 326 (ARPAVKKPAGAAAPATTQAPAGA) are compositionally biased toward low complexity. The segment covering 356–369 (SSGGVDRGWRGGPK) has biased composition (gly residues). Residues 471 to 640 (PRPPVVTVMG…LLQAEVLELK (170 aa)) form the tr-type G domain. Positions 480–487 (GHVDHGKT) are G1. 480 to 487 (GHVDHGKT) lines the GTP pocket. The tract at residues 505–509 (GITQH) is G2. The segment at 526–529 (DTPG) is G3. Residues 526-530 (DTPGH) and 580-583 (NKID) contribute to the GTP site. A G4 region spans residues 580–583 (NKID). Positions 616–618 (SAK) are G5.

The protein belongs to the TRAFAC class translation factor GTPase superfamily. Classic translation factor GTPase family. IF-2 subfamily.

The protein localises to the cytoplasm. In terms of biological role, one of the essential components for the initiation of protein synthesis. Protects formylmethionyl-tRNA from spontaneous hydrolysis and promotes its binding to the 30S ribosomal subunits. Also involved in the hydrolysis of GTP during the formation of the 70S ribosomal complex. The polypeptide is Translation initiation factor IF-2 (Burkholderia orbicola (strain AU 1054)).